Reading from the N-terminus, the 148-residue chain is Low molecular weight protein-tyrosine-phosphatase Etp (148 aa).

The active-site Nucleophile is Cys13. Residue Arg19 is part of the active site. The active-site Proton donor is the Asp119.

The protein belongs to the low molecular weight phosphotyrosine protein phosphatase family.

The catalysed reaction is O-phospho-L-tyrosyl-[protein] + H2O = L-tyrosyl-[protein] + phosphate. In terms of biological role, dephosphorylates etk. The chain is Low molecular weight protein-tyrosine-phosphatase Etp (etp) from Escherichia coli O157:H7.